The primary structure comprises 144 residues: Cell division protein SepF (144 aa).

Residues 21-38 (TDLQGTKTTDEVSPTSRP) show a composition bias toward polar residues. The tract at residues 21–40 (TDLQGTKTTDEVSPTSRPDN) is disordered.

Belongs to the SepF family. Homodimer. Interacts with FtsZ.

It localises to the cytoplasm. Its function is as follows. Cell division protein that is part of the divisome complex and is recruited early to the Z-ring. Probably stimulates Z-ring formation, perhaps through the cross-linking of FtsZ protofilaments. Its function overlaps with FtsA. In Latilactobacillus sakei subsp. sakei (strain 23K) (Lactobacillus sakei subsp. sakei), this protein is Cell division protein SepF.